We begin with the raw amino-acid sequence, 105 residues long: uncharacterized protein (105 aa).

This is an uncharacterized protein from Bacillus phage SPbeta (Bacillus phage SPBc2).